The sequence spans 585 residues: Protein-lysine N-methyltransferase EFM1 (585 aa).

Positions 23–281 constitute an SET domain; sequence PKISFRITED…AQDELFNNYG (259 aa). Residue Tyr-280 coordinates S-adenosyl-L-methionine.

Belongs to the class V-like SAM-binding methyltransferase superfamily. RKM1 family.

It is found in the cytoplasm. S-adenosyl-L-methionine-dependent protein-lysine N-methyltransferase that monomethylates elongation factor 1-alpha (TEF1/TEF2) at 'Lys-30'. The protein is Protein-lysine N-methyltransferase EFM1 of Saccharomyces cerevisiae (strain ATCC 204508 / S288c) (Baker's yeast).